Consider the following 328-residue polypeptide: Reticulocalbin-3 (328 aa).

The signal sequence occupies residues 1–20; the sequence is MMWRPSVLLLLLLLRHGAQG. Positions 19–49 are disordered; it reads QGKPSPDAGPHGQGRVHQAAPLSDAPHDDAH. EF-hand domains are found at residues 75–112, 113–148, 163–198, 200–235, 241–276, and 277–312; these read ESQA…TQQR, HIRD…HYAP, KMLA…EEFP, MRDI…AEPG, WVQT…PAQD, and QPLV…FVGS. Positions 92, 94, 96, 101, 126, 128, 130, 132, and 137 each coordinate Ca(2+). Asn140 is a glycosylation site (N-linked (GlcNAc...) asparagine). Positions 176, 178, 180, 182, 187, 213, 215, 217, 219, 224, 254, 256, 258, 260, 265, 290, 292, 294, 296, and 301 each coordinate Ca(2+). The Prevents secretion from ER motif lies at 325-328; sequence HDEL.

Belongs to the CREC family. As to quaternary structure, interacts with PCSK6 (immature form including the propeptide); probably involved in the maturation and the secretion of PCSK6. Degraded by PCSK6 and other endoproteases including FURIN and PCSK5. Post-translationally, N-glycosylated. As to expression, widely expressed.

The protein resides in the endoplasmic reticulum lumen. Functionally, probable molecular chaperone assisting protein biosynthesis and transport in the endoplasmic reticulum. Required for the proper biosynthesis and transport of pulmonary surfactant-associated protein A/SP-A, pulmonary surfactant-associated protein D/SP-D and the lipid transporter ABCA3. By regulating both the proper expression and the degradation through the endoplasmic reticulum-associated protein degradation pathway of these proteins plays a crucial role in pulmonary surfactant homeostasis. Has an anti-fibrotic activity by negatively regulating the secretion of type I and type III collagens. This calcium-binding protein also transiently associates with immature PCSK6 and regulates its secretion. The sequence is that of Reticulocalbin-3 from Homo sapiens (Human).